The primary structure comprises 318 residues: L-carnitine dehydrogenase (318 aa).

Residue 14-19 (GAGVIG) participates in NAD(+) binding.

The protein belongs to the 3-hydroxyacyl-CoA dehydrogenase family. L-carnitine dehydrogenase subfamily. As to quaternary structure, homodimer.

Its subcellular location is the cytoplasm. The enzyme catalyses carnitine + NAD(+) = 3-dehydrocarnitine + NADH + H(+). It participates in amine and polyamine metabolism; carnitine metabolism. Its function is as follows. Catalyzes the NAD(+)-dependent oxidation of L-carnitine to 3-dehydrocarnitine. The sequence is that of L-carnitine dehydrogenase from Streptomyces coelicolor (strain ATCC BAA-471 / A3(2) / M145).